Reading from the N-terminus, the 100-residue chain is Integration host factor subunit alpha (100 aa).

This sequence belongs to the bacterial histone-like protein family. Heterodimer of an alpha and a beta chain.

In terms of biological role, this protein is one of the two subunits of integration host factor, a specific DNA-binding protein that functions in genetic recombination as well as in transcriptional and translational control. The polypeptide is Integration host factor subunit alpha (Alcanivorax borkumensis (strain ATCC 700651 / DSM 11573 / NCIMB 13689 / SK2)).